The sequence spans 266 residues: MTTITRISKDKGEFYLLWLSSGEKLRVSEDILVRQRLLKGQELSDTLIEEIKKASSYDVGLQMAMNYLSYQLRSKKEIFTYLKEKEIVPEDRVKIVQRLEELRLLDDAIFSESYVRTAMRTSDKGPRNVAQQLKQKGISEEDIQHGLTFYTLDEQLNVATATAEKAMKRYRTKSFKDALQKMRLHLMQKGFTNEIIDLALESLAFEKDEEQEQQALDKEGERLWRANQRFDFSKKVQKVKQSLFQKGFDYDLIQQFISEKEVEHDE.

This sequence belongs to the RecX family.

It is found in the cytoplasm. Its function is as follows. Modulates RecA activity. This chain is Regulatory protein RecX, found in Enterococcus faecalis (strain ATCC 700802 / V583).